The chain runs to 122 residues: Large ribosomal subunit protein uL14 (122 aa).

It belongs to the universal ribosomal protein uL14 family. In terms of assembly, part of the 50S ribosomal subunit. Forms a cluster with proteins L3 and L19. In the 70S ribosome, L14 and L19 interact and together make contacts with the 16S rRNA in bridges B5 and B8.

Functionally, binds to 23S rRNA. Forms part of two intersubunit bridges in the 70S ribosome. The polypeptide is Large ribosomal subunit protein uL14 (Nocardioides sp. (strain ATCC BAA-499 / JS614)).